A 442-amino-acid polypeptide reads, in one-letter code: Glutamate synthase large subunit-like protein (442 aa).

The disordered stretch occupies residues L108 to H133. The span at G109–T121 shows a compositional bias: low complexity.

This sequence belongs to the glutamate synthase family.

This is Glutamate synthase large subunit-like protein (glxD) from Rhizobium meliloti (strain 1021) (Ensifer meliloti).